Consider the following 221-residue polypeptide: Small ribosomal subunit protein uS3 (221 aa).

A KH type-2 domain is found at Leu-39–Arg-107.

This sequence belongs to the universal ribosomal protein uS3 family. In terms of assembly, part of the 30S ribosomal subunit. Forms a tight complex with proteins S10 and S14.

Functionally, binds the lower part of the 30S subunit head. Binds mRNA in the 70S ribosome, positioning it for translation. In Bdellovibrio bacteriovorus (strain ATCC 15356 / DSM 50701 / NCIMB 9529 / HD100), this protein is Small ribosomal subunit protein uS3.